The following is an 865-amino-acid chain: Probable alpha/beta-glucosidase ARB_02101 (865 aa).

The signal sequence occupies residues 1–21; the sequence is MFGRTLALAAVFATTVLSAAA. N-linked (GlcNAc...) asparagine glycans are attached at residues Asn101 and Asn299. Asp428 acts as the Nucleophile in catalysis. The active site involves Glu431. N-linked (GlcNAc...) asparagine glycosylation occurs at Asn515. The active-site Proton donor is the Asp548. N-linked (GlcNAc...) asparagine glycosylation is found at Asn549, Asn585, and Asn748.

It belongs to the glycosyl hydrolase 31 family.

Its subcellular location is the secreted. The enzyme catalyses Hydrolysis of terminal, non-reducing (1-&gt;4)-linked alpha-D-glucose residues with release of alpha-D-glucose.. It catalyses the reaction Hydrolysis of terminal, non-reducing beta-D-glucosyl residues with release of beta-D-glucose.. Its function is as follows. Glucosidase involved in the degradation of cellulosic biomass. Has both alpha- and beta-glucosidase activity. This Arthroderma benhamiae (strain ATCC MYA-4681 / CBS 112371) (Trichophyton mentagrophytes) protein is Probable alpha/beta-glucosidase ARB_02101.